A 337-amino-acid chain; its full sequence is Glucan endo-1,3-beta-glucosidase, basic isoform 1 (337 aa).

The Proton donor role is filled by Glu-94. Glu-239 serves as the catalytic Nucleophile. Positions 315–337 (VSERVWDISAETNSTASSLISEM) are cleaved as a propeptide — removed in mature form. Asn-327 carries N-linked (GlcNAc...) asparagine glycosylation.

It belongs to the glycosyl hydrolase 17 family.

The protein resides in the vacuole. It carries out the reaction Hydrolysis of (1-&gt;3)-beta-D-glucosidic linkages in (1-&gt;3)-beta-D-glucans.. In terms of biological role, is thought to be an important plant defense-related product against fungal pathogens. The sequence is that of Glucan endo-1,3-beta-glucosidase, basic isoform 1 (GLUB1) from Solanum tuberosum (Potato).